Here is a 141-residue protein sequence, read N- to C-terminus: MPTPSMEDYIEQIYILIEEKGYARVSDIAEALSVHPSSVTKMVQKLDKDEYLVYEKYRGLVLTPKGRKIGQRLVYRHELLEQFLRLIGVSEENIYRDVEGIEHHLSWNAIDRIGDLVQYFQEDERRLEALRDVQKRNEQGE.

The HTH dtxR-type domain occupies 1 to 63; that stretch reads MPTPSMEDYI…YEKYRGLVLT (63 aa). Positions 8, 11, 77, 99, 102, and 103 each coordinate Mn(2+).

It belongs to the DtxR/MntR family. As to quaternary structure, homodimer.

The protein localises to the cytoplasm. Its activity is regulated as follows. DNA binding is strongly activated by Mn(2+). Central regulator of manganese homeostasis. The polypeptide is HTH-type transcriptional regulator MntR (Geobacillus kaustophilus (strain HTA426)).